The following is a 325-amino-acid chain: Elongation factor P--(R)-beta-lysine ligase (325 aa).

Substrate is bound at residue 76-78 (SPE). Residues 100 to 102 (RNE) and Asn-109 contribute to the ATP site. Tyr-118 lines the substrate pocket. 244–245 (EL) is a binding site for ATP. A substrate-binding site is contributed by Glu-251. ATP is bound at residue Gly-300.

Belongs to the class-II aminoacyl-tRNA synthetase family. EpmA subfamily. As to quaternary structure, homodimer.

It carries out the reaction D-beta-lysine + L-lysyl-[protein] + ATP = N(6)-((3R)-3,6-diaminohexanoyl)-L-lysyl-[protein] + AMP + diphosphate + H(+). Its function is as follows. With EpmB is involved in the beta-lysylation step of the post-translational modification of translation elongation factor P (EF-P) on 'Lys-34'. Catalyzes the ATP-dependent activation of (R)-beta-lysine produced by EpmB, forming a lysyl-adenylate, from which the beta-lysyl moiety is then transferred to the epsilon-amino group of EF-P 'Lys-34'. In Salmonella typhi, this protein is Elongation factor P--(R)-beta-lysine ligase.